Reading from the N-terminus, the 1515-residue chain is Lysophospholipase nte1 (1515 aa).

Over 1–59 the chain is Cytoplasmic; the sequence is MESLSNLGNAMSSVLSETTSTTATAILADPTEALSSVVALASDAVSKATSDVVPEHTPT. Residues 60–80 traverse the membrane as a helical segment; that stretch reads SWFTIILWLLHRISSVLYFVI. Over 81–102 the chain is Lumenal; the sequence is KLTTITTPTFLFNIFSTSLTVT. Residues 103–123 form a helical membrane-spanning segment; sequence MNATTLVLIMLFMMAGVTWVV. Residues 124-1515 are Cytoplasmic-facing; the sequence is RYRYLNMYSR…RTMAPRRASI (1392 aa). 3 disordered regions span residues 278–303, 519–580, and 617–639; these read MHDTDDDDSPDPTPSAPGTAMPGYPM, VTAT…TPRN, and VNPDSTQASPRFVPTDQRRSRGG. Polar residues-rich tracts occupy residues 543-554 and 566-579; these read LTNTQQLKSGPA and PRPQRNLSPFSTPR. A nucleoside 3',5'-cyclic phosphate-binding positions include 670-789 and 835-955; these read SPVP…LAGY and RLTE…IAAR. The region spanning 1212–1376 is the PNPLA domain; it reads LVLGGGGARG…IDNLTVSRMK (165 aa). The short motif at 1216–1221 is the GXGXXG element; sequence GGGARG. The short motif at 1243-1247 is the GXSXG element; that stretch reads GTSIG. Ser-1245 (nucleophile) is an active-site residue. The Proton acceptor role is filled by Asp-1363. The DGA/G motif lies at 1363-1365; sequence DGG.

Belongs to the NTE family.

The protein localises to the endoplasmic reticulum membrane. It carries out the reaction a 1-acyl-sn-glycero-3-phosphocholine + H2O = sn-glycerol 3-phosphocholine + a fatty acid + H(+). Inhibited by organophosphorus esters. Its function is as follows. Intracellular phospholipase B that catalyzes the double deacylation of phosphatidylcholine (PC) to glycerophosphocholine (GroPCho). Plays an important role in membrane lipid homeostasis. Responsible for the rapid PC turnover in response to inositol, elevated temperatures, or when choline is present in the growth medium. The protein is Lysophospholipase nte1 (nte1) of Neurospora crassa (strain ATCC 24698 / 74-OR23-1A / CBS 708.71 / DSM 1257 / FGSC 987).